Here is a 480-residue protein sequence, read N- to C-terminus: MTYGEEEPVSPMARVFQSPGIDLCAVTIMGFKTKINPDVVLDALKQNVSKHPRFSSILSDNGAKWIETEVNVEDHVIVPYIDAEEIGEGGQSFIDDYMSRLTMIPLDRSRPLWDIHILNVKTSEAEAVGFIRSHHSLGDGMSLISLMLACTHKTSDPDMFSNAIPSMKRRATMSHSLKTKGWFLRSIFTIGSTMRLLWNTTIDMLLLLATVLFLKDTKTPLKAGADVRSNPKRFYHRIISLDDIKLIKNAMNMTINDVLFGITQASLSHYLNRQYGTKKEEDGALTSYRNNLPDGIRFRVACTVNLRSDIGFKPLADMMVKDSKCRWGNYFSFIFLPFTIGLQTDPLVYLKMSKSMMARKKHSYHAALVYFIIKIVLKVFGAKAAAELFDRPVRNTTTCVSNVIGPMEEISFRGHPVSYIAPSSYGHSHALLIHLMSYADKMIISLAYDPTVISDPHKICDDMEESLKAMKASLCERGLL.

At 1–193 the chain is on the cytoplasmic side; the sequence is MTYGEEEPVS…LRSIFTIGST (193 aa). H135 acts as the Proton acceptor in catalysis. Residues 194–214 traverse the membrane as a helical segment; that stretch reads MRLLWNTTIDMLLLLATVLFL. Topologically, residues 215–329 are lumenal; sequence KDTKTPLKAG…VKDSKCRWGN (115 aa). N252 carries N-linked (GlcNAc...) asparagine glycosylation. A helical transmembrane segment spans residues 330 to 350; the sequence is YFSFIFLPFTIGLQTDPLVYL. Over 351–365 the chain is Cytoplasmic; the sequence is KMSKSMMARKKHSYH. Residues 366-386 traverse the membrane as a helical segment; sequence AALVYFIIKIVLKVFGAKAAA. The Lumenal portion of the chain corresponds to 387–480; sequence ELFDRPVRNT…KASLCERGLL (94 aa). N-linked (GlcNAc...) asparagine glycosylation is present at N395.

The protein in the N-terminal section; belongs to the long-chain O-acyltransferase family. Expressed in roots, stems, leaves, flowers and siliques.

It localises to the cell membrane. It is found in the endoplasmic reticulum membrane. The protein localises to the golgi apparatus membrane. It catalyses the reaction an acyl-CoA + a 1,2-diacyl-sn-glycerol = a triacyl-sn-glycerol + CoA. The enzyme catalyses a long chain fatty alcohol + a fatty acyl-CoA = a wax ester + CoA. It participates in glycerolipid metabolism; triacylglycerol biosynthesis. The protein operates within lipid metabolism. Functionally, bifunctional wax ester synthase/diacylglycerol acyltransferase that uses acyl-CoAs with 14, 16 and 18 carbons as substrates, preferably in combination with 16:0ol alcohol. Involved in cuticular wax biosynthesis. This is Wax ester synthase/diacylglycerol acyltransferase 7 from Arabidopsis thaliana (Mouse-ear cress).